A 206-amino-acid chain; its full sequence is Protein GrpE (206 aa).

This sequence belongs to the GrpE family. In terms of assembly, homodimer.

The protein resides in the cytoplasm. Participates actively in the response to hyperosmotic and heat shock by preventing the aggregation of stress-denatured proteins, in association with DnaK and GrpE. It is the nucleotide exchange factor for DnaK and may function as a thermosensor. Unfolded proteins bind initially to DnaJ; upon interaction with the DnaJ-bound protein, DnaK hydrolyzes its bound ATP, resulting in the formation of a stable complex. GrpE releases ADP from DnaK; ATP binding to DnaK triggers the release of the substrate protein, thus completing the reaction cycle. Several rounds of ATP-dependent interactions between DnaJ, DnaK and GrpE are required for fully efficient folding. The chain is Protein GrpE from Shewanella baltica (strain OS223).